Consider the following 360-residue polypeptide: Histidinol-phosphate aminotransferase (360 aa).

K223 carries the post-translational modification N6-(pyridoxal phosphate)lysine.

The protein belongs to the class-II pyridoxal-phosphate-dependent aminotransferase family. Histidinol-phosphate aminotransferase subfamily. Homodimer. The cofactor is pyridoxal 5'-phosphate.

It carries out the reaction L-histidinol phosphate + 2-oxoglutarate = 3-(imidazol-4-yl)-2-oxopropyl phosphate + L-glutamate. It functions in the pathway amino-acid biosynthesis; L-histidine biosynthesis; L-histidine from 5-phospho-alpha-D-ribose 1-diphosphate: step 7/9. This chain is Histidinol-phosphate aminotransferase (hisC), found in Bacillus subtilis (strain 168).